The chain runs to 346 residues: MQQEKELVKQKAKELLLDLLSIYTPSKNETNATKFFEKISNEFNLKLEILPDSNSFILGEGEILLASHVDTVPGYIEPKIENEVIYGRGAVDAKGPLISMIIAAWLLNEKGIKVMVSGLADEESTSIGAKELTLKNFNFKHIIVGEPSNGTDIVVEYRGSIQLDIMCESTPEHSSSAKSNLIVDISKKIIEVYKQPENYDKPSIVPTIIRAGESYNVTPAKLYLHFDVRYAINNKRDDLINEIKDKFQECGLKIVDETPPVKVSINNPVVKSLTRALLKQNIKPRLVRKAGTSDMNILQKITTSIATYGPGNSMLEHTNQEKITFDEIYIGVKTYMLAIEELWQKS.

His68 is a binding site for Zn(2+). The active site involves Asp70. Position 92 (Asp92) interacts with Zn(2+). Catalysis depends on Glu122, which acts as the Proton acceptor. Zn(2+)-binding residues include Glu123, Glu146, and His317.

Belongs to the peptidase M20A family. LysK subfamily. It depends on Zn(2+) as a cofactor. Co(2+) is required as a cofactor.

It is found in the cytoplasm. The enzyme catalyses [amino-group carrier protein]-C-terminal-gamma-(L-lysyl)-L-glutamate + H2O = [amino-group carrier protein]-C-terminal-L-glutamate + L-lysine. The catalysed reaction is [amino-group carrier protein]-C-terminal-gamma-(L-ornithyl)-L-glutamate + H2O = [amino-group carrier protein]-C-terminal-L-glutamate + L-ornithine. The protein operates within amino-acid biosynthesis; L-lysine biosynthesis via AAA pathway; L-lysine from L-alpha-aminoadipate (Thermus route): step 5/5. It participates in amino-acid biosynthesis; L-arginine biosynthesis. Functionally, catalyzes the release of L-lysine from [LysW]-gamma-L-lysine and the release of L-ornithine from [LysW]-L-ornithine. In Saccharolobus islandicus (strain M.16.27) (Sulfolobus islandicus), this protein is [LysW]-lysine/[LysW]-ornithine hydrolase.